The primary structure comprises 277 residues: Shikimate dehydrogenase (NADP(+)) (277 aa).

Residues 18–20 (SKS) and T65 each bind shikimate. K69 serves as the catalytic Proton acceptor. E81 is an NADP(+) binding site. Shikimate is bound by residues N90 and D106. Residues 130–134 (GAGGA), 154–159 (NRTFSK), and M217 contribute to the NADP(+) site. Position 219 (Y219) interacts with shikimate. G241 contacts NADP(+).

Belongs to the shikimate dehydrogenase family. As to quaternary structure, homodimer.

It carries out the reaction shikimate + NADP(+) = 3-dehydroshikimate + NADPH + H(+). It functions in the pathway metabolic intermediate biosynthesis; chorismate biosynthesis; chorismate from D-erythrose 4-phosphate and phosphoenolpyruvate: step 4/7. Involved in the biosynthesis of the chorismate, which leads to the biosynthesis of aromatic amino acids. Catalyzes the reversible NADPH linked reduction of 3-dehydroshikimate (DHSA) to yield shikimate (SA). This chain is Shikimate dehydrogenase (NADP(+)), found in Vibrio parahaemolyticus serotype O3:K6 (strain RIMD 2210633).